The following is a 360-amino-acid chain: Peptide chain release factor 1 (360 aa).

Gln235 is modified (N5-methylglutamine). The segment covering 284–293 (HKRQQEEAST) has biased composition (basic and acidic residues). Residues 284-305 (HKRQQEEASTRRNLLGSGDRSD) are disordered.

It belongs to the prokaryotic/mitochondrial release factor family. Post-translationally, methylated by PrmC. Methylation increases the termination efficiency of RF1.

The protein localises to the cytoplasm. Its function is as follows. Peptide chain release factor 1 directs the termination of translation in response to the peptide chain termination codons UAG and UAA. The protein is Peptide chain release factor 1 of Pectobacterium atrosepticum (strain SCRI 1043 / ATCC BAA-672) (Erwinia carotovora subsp. atroseptica).